The sequence spans 166 residues: Regulatory protein RecX (166 aa).

Belongs to the RecX family.

The protein localises to the cytoplasm. In terms of biological role, modulates RecA activity. The chain is Regulatory protein RecX from Shigella sonnei (strain Ss046).